We begin with the raw amino-acid sequence, 114 residues long: T cell receptor beta variable 4-1 (114 aa).

Residues 1–21 (MGCRLLCCAVLCLLGAVPIDT) form the signal peptide. An Ig-like domain is found at 22–114 (EVTQTPKHLV…SALYLCASSQ (93 aa)). A disulfide bridge connects residues C42 and C110. Residues N76 and N89 are each glycosylated (N-linked (GlcNAc...) asparagine).

Alpha-beta TR is a heterodimer composed of an alpha and beta chain; disulfide-linked. The alpha-beta TR is associated with the transmembrane signaling CD3 coreceptor proteins to form the TR-CD3 (TcR or TCR). The assembly of alpha-beta TR heterodimers with CD3 occurs in the endoplasmic reticulum where a single alpha-beta TR heterodimer associates with one CD3D-CD3E heterodimer, one CD3G-CD3E heterodimer and one CD247 homodimer forming a stable octameric structure. CD3D-CD3E and CD3G-CD3E heterodimers preferentially associate with TR alpha and TR beta chains, respectively. The association of the CD247 homodimer is the last step of TcR assembly in the endoplasmic reticulum and is required for transport to the cell surface.

It is found in the cell membrane. In terms of biological role, v region of the variable domain of T cell receptor (TR) beta chain that participates in the antigen recognition. Alpha-beta T cell receptors are antigen specific receptors which are essential to the immune response and are present on the cell surface of T lymphocytes. Recognize peptide-major histocompatibility (MH) (pMH) complexes that are displayed by antigen presenting cells (APC), a prerequisite for efficient T cell adaptive immunity against pathogens. Binding of alpha-beta TR to pMH complex initiates TR-CD3 clustering on the cell surface and intracellular activation of LCK that phosphorylates the ITAM motifs of CD3G, CD3D, CD3E and CD247 enabling the recruitment of ZAP70. In turn ZAP70 phosphorylates LAT, which recruits numerous signaling molecules to form the LAT signalosome. The LAT signalosome propagates signal branching to three major signaling pathways, the calcium, the mitogen-activated protein kinase (MAPK) kinase and the nuclear factor NF-kappa-B (NF-kB) pathways, leading to the mobilization of transcription factors that are critical for gene expression and essential for T cell growth and differentiation. The T cell repertoire is generated in the thymus, by V-(D)-J rearrangement. This repertoire is then shaped by intrathymic selection events to generate a peripheral T cell pool of self-MH restricted, non-autoaggressive T cells. Post-thymic interaction of alpha-beta TR with the pMH complexes shapes TR structural and functional avidity. This is T cell receptor beta variable 4-1 from Homo sapiens (Human).